The following is a 344-amino-acid chain: N-acetyl-gamma-glutamyl-phosphate reductase (344 aa).

Residue cysteine 148 is part of the active site.

It belongs to the NAGSA dehydrogenase family. Type 1 subfamily.

It is found in the cytoplasm. The enzyme catalyses N-acetyl-L-glutamate 5-semialdehyde + phosphate + NADP(+) = N-acetyl-L-glutamyl 5-phosphate + NADPH + H(+). It functions in the pathway amino-acid biosynthesis; L-arginine biosynthesis; N(2)-acetyl-L-ornithine from L-glutamate: step 3/4. In terms of biological role, catalyzes the NADPH-dependent reduction of N-acetyl-5-glutamyl phosphate to yield N-acetyl-L-glutamate 5-semialdehyde. The sequence is that of N-acetyl-gamma-glutamyl-phosphate reductase from Geobacillus kaustophilus (strain HTA426).